A 306-amino-acid chain; its full sequence is Ornithine carbamoyltransferase (306 aa).

Carbamoyl phosphate-binding positions include 51-54 (STRT), Gln78, Arg102, and 129-132 (HPCQ). L-ornithine is bound by residues Asn160, Asp223, and 227–228 (SM). Residues 263–264 (CL) and Arg291 each bind carbamoyl phosphate.

The protein belongs to the aspartate/ornithine carbamoyltransferase superfamily. OTCase family.

The protein localises to the cytoplasm. The catalysed reaction is carbamoyl phosphate + L-ornithine = L-citrulline + phosphate + H(+). The protein operates within amino-acid biosynthesis; L-arginine biosynthesis; L-arginine from L-ornithine and carbamoyl phosphate: step 1/3. Its function is as follows. Reversibly catalyzes the transfer of the carbamoyl group from carbamoyl phosphate (CP) to the N(epsilon) atom of ornithine (ORN) to produce L-citrulline. In Nostoc punctiforme (strain ATCC 29133 / PCC 73102), this protein is Ornithine carbamoyltransferase (argF).